We begin with the raw amino-acid sequence, 178 residues long: Orotate phosphoribosyltransferase (178 aa).

5-phospho-alpha-D-ribose 1-diphosphate-binding positions include arginine 92, lysine 93, lysine 96, and 118–126; that span reads EDVTTTGGS. Orotate-binding residues include threonine 122 and arginine 150.

Belongs to the purine/pyrimidine phosphoribosyltransferase family. PyrE subfamily. Homodimer. Mg(2+) serves as cofactor.

It catalyses the reaction orotidine 5'-phosphate + diphosphate = orotate + 5-phospho-alpha-D-ribose 1-diphosphate. Its pathway is pyrimidine metabolism; UMP biosynthesis via de novo pathway; UMP from orotate: step 1/2. In terms of biological role, catalyzes the transfer of a ribosyl phosphate group from 5-phosphoribose 1-diphosphate to orotate, leading to the formation of orotidine monophosphate (OMP). The protein is Orotate phosphoribosyltransferase of Methanosphaera stadtmanae (strain ATCC 43021 / DSM 3091 / JCM 11832 / MCB-3).